The primary structure comprises 148 residues: MLVKTTHFGEINIKDEDIIEFSEGIVGFEDIHRYGIIRNQNSDSPFSWLQAVEKSELAFAVVDPFVIKKDYDFVLSDEYVKALDINDPSQVNVYAIVVVPDDLTKISMNLKAPVIVNKDNRKAAQVILDTDEYTVRHYIMDELQKQEV.

The protein belongs to the FliW family. In terms of assembly, interacts with translational regulator CsrA and flagellin(s).

The protein resides in the cytoplasm. Its function is as follows. Acts as an anti-CsrA protein, binds CsrA and prevents it from repressing translation of its target genes, one of which is flagellin. Binds to flagellin and participates in the assembly of the flagellum. This Ruminiclostridium cellulolyticum (strain ATCC 35319 / DSM 5812 / JCM 6584 / H10) (Clostridium cellulolyticum) protein is Flagellar assembly factor FliW.